The following is a 406-amino-acid chain: RNA exonuclease 4 (406 aa).

Over residues 1 to 10 the composition is skewed to polar residues; sequence MAPELSSNWK. Disordered stretches follow at residues 1-108 and 156-181; these read MAPE…TLPS and AGLT…PTDL. Composition is skewed to low complexity over residues 54–64, 72–82, and 94–108; these read SQQQQQASNPS, SQTQSQPSSQK, and SKPT…TLPS. Residues 162 to 173 show a composition bias toward polar residues; that stretch reads GHSSSSPKSNKN. The Exonuclease domain occupies 216–367; it reads YLSIDCEMVG…EDARVAMLLF (152 aa). Residues 377–387 are compositionally biased toward basic and acidic residues; that stretch reads ENSNRYEEGQA. Residues 377-406 form a disordered region; it reads ENSNRYEEGQAKKGGNGGGGGGGKKKKGKK. Residues 388–398 are compositionally biased toward gly residues; the sequence is KKGGNGGGGGG.

The protein belongs to the REXO4 family.

It localises to the nucleus. Functionally, exoribonuclease involved in ribosome biosynthesis. Involved in the processing of ITS1, the internal transcribed spacer localized between the 18S and 5.8S rRNAs. The sequence is that of RNA exonuclease 4 (rex-4) from Neurospora crassa (strain ATCC 24698 / 74-OR23-1A / CBS 708.71 / DSM 1257 / FGSC 987).